Consider the following 210-residue polypeptide: Prolactin (210 aa).

A signal peptide spans 1-23 (MARRSQGTKLHLAVLCLVVSCHA). 2 disulfide bridges follow: cysteine 69/cysteine 183 and cysteine 200/cysteine 210.

Belongs to the somatotropin/prolactin family. Pituitary gland.

It localises to the secreted. The polypeptide is Prolactin (prl) (Coregonus autumnalis (Arctic cisco)).